We begin with the raw amino-acid sequence, 160 residues long: Putative tRNA (cytidine(34)-2'-O)-methyltransferase (160 aa).

S-adenosyl-L-methionine contacts are provided by Ile-82, Gly-107, Leu-128, and Ser-136.

This sequence belongs to the class IV-like SAM-binding methyltransferase superfamily. RNA methyltransferase TrmH family. TrmL subfamily.

Its subcellular location is the cytoplasm. The catalysed reaction is cytidine(34) in tRNA + S-adenosyl-L-methionine = 2'-O-methylcytidine(34) in tRNA + S-adenosyl-L-homocysteine + H(+). It catalyses the reaction 5-carboxymethylaminomethyluridine(34) in tRNA(Leu) + S-adenosyl-L-methionine = 5-carboxymethylaminomethyl-2'-O-methyluridine(34) in tRNA(Leu) + S-adenosyl-L-homocysteine + H(+). Functionally, could methylate the ribose at the nucleotide 34 wobble position in tRNA. In Bacillus subtilis (strain 168), this protein is Putative tRNA (cytidine(34)-2'-O)-methyltransferase (cspR).